Here is a 479-residue protein sequence, read N- to C-terminus: MQNLGASMDNNKKFKVVIVGGSIAGLTLAHCLSKFGIDYVVLEKRREIAPQEGASVGIMPNGGRVLEQLGLFDDVERAIEPLSVAQLVYPDGFCSESEYPKKLCERFGFPLAFLDRQMLLESLYANLPDITRVKTNSAVIAVEHEDDRVRVLTTDNCSYEGHLVVGADGIHSTIRKEMWRAASSLHQGQVEDTNSMMNITYACVYGISSAHPLLKPGQQITCFNDGWSILSVVGKNGRTFWFLFLKLEREYKYNEAPKYTKEDAIANCDRLSAHTFWDTVTFGDVWSRREVFTMTPLEEGVFEQWSCGRIVCIGDSMHKFAPNIGQGANCAIEDAGELANALARIFNDREKGDGFKPSTPDLSNMLEQFQGKRISRIKALYKVARLAIRLQARDGLAMTLMGRYVMPYLGDKVADWASRDIADGAILEFLPPPERSGSGWQKYSQKSKKSNTPFILAVLAGLGFLLTMFKQQWEYHQDS.

The FAD site is built by E43, G57, and R116. N-linked (GlcNAc...) asparagine glycosylation is found at N156 and N198. 2 residues coordinate FAD: D315 and A328. A helical transmembrane segment spans residues 453-473 (PFILAVLAGLGFLLTMFKQQW).

It belongs to the paxM FAD-dependent monooxygenase family. It depends on FAD as a cofactor.

Its subcellular location is the membrane. The catalysed reaction is verruculide C + AH2 + O2 = verruculide C epoxide + A + H2O. It functions in the pathway secondary metabolite biosynthesis; terpenoid biosynthesis. In terms of biological role, FAD-dependent monooxygenase; part of the gene cluster that mediates the biosynthesis of chrodrimanin B, a meroterpenoid that acts as a potent blocker of insect GABA-gated chloride channels. The first step of the pathway is the biosynthesis of 6-hydroxymellein by the polyketide synthase cdmE. The prenyltransferase cdmH acts as a 6-hydroxymellein 5-farnesyltransferase and produces the hydrophobic metabolite verruculide C. The FAD-dependent monooxygenase cdmI further converts verruculide C into verruculide B. The terpene cyclase cdmG then produced the pentacyclic molecule 3-hydroxypentacecilide A, the backbone structure of chrodrimanin B, via folding the farnesyl moiety of the substrate into the chair-boat conformation. The short-chain dehydrogenase/reductase cdmF functions as the 3-OH dehydrogenase that oxidizes the C-3 hydroxyl group of 3-hydroxypentacecilide A and produces chrodrimanin C, the dehydrogenated product of 3-hydroxypentacecilide A. The cytochrome P450 monooxygenase cdmJ then accepts both 3-hydroxypentacecilide A and chrodrimanin C and functions as a C-7-beta-hydroxylase to produce respectively chrodrimanin H and chrodrimanin F. The dioxygenase cdmA accepts chrodrimanin H to afford chrodrimanin E, which is further transformed to chrodrimanin A by the dioxygenase cdmD. CdmA can also accept chrodrimanin C as substrate to convert it into verruculide A, which is further converted into chrodrimanin T by cdmD. The last step of the biosynthesis is proposed to be performed by the acetyltransferase cdmC which acetylates chrodrimanin A to yield chrodrimanin B. The pathway may also lead to the production of additional shunt products, including chrodrimanins T and U. The chain is FAD-dependent monooxygenase cdmI from Talaromyces verruculosus (Penicillium verruculosum).